The sequence spans 700 residues: Pyrroloquinoline quinone transporter (700 aa).

An N-terminal signal peptide occupies residues 1–23 (MKIFSVRQTVLPALLVLSPVVFA). The TBDR plug domain maps to 39-157 (SELDTPAAVS…SGGVMNVTTQ (119 aa)). 24 beta stranded membrane passes run 132-136 (NVEVL), 150-160 (GVMNVTTQTGQ), 162-171 (PPTIEASSYY), 177-186 (WRYGLKATGA), 195-204 (DVDYTVSTTR), 220-227 (LANAKLGV), 233-241 (SKLSLIFNS), 280-288 (QAGLRYERS), 295-301 (MSVMMYA), 335-344 (GIDSRWTHRG), 350-358 (VTFTTGLNY), 398-405 (DPYLQTQW), 411-419 (LSLDAGVRY), 447-456 (WLPAGSLKYA), 464-468 (YLAAG), 500-509 (TIEIGSKTRI), 511-520 (DGLLSLALFQ), 549-556 (GAELAWDQ), 563-570 (RVNASWTW), 597-604 (MGFASIGY), 611-617 (YAGTEAR), 637-647 (LVGLFTGYKYN), 651-659 (LTVDLFGRV), and 689-697 (YGVGMNIAW). One can recognise a TBDR beta-barrel domain in the interval 162-697 (PPTIEASSYY…NYGVGMNIAW (536 aa)). Positions 680–700 (YYEPSPGRNYGVGMNIAWRFE) match the TonB C-terminal box motif.

The protein belongs to the TonB-dependent receptor family.

It is found in the cell outer membrane. Its function is as follows. Mediates the TonB-dependent high affinity transport across the outer membrane of pyrroloquinoline quinone (PQQ), a redox cofactor required for the activity of Gcd and Asd dehydrogenases. The uptake process is energised via the TonB-ExbBD complex. Not involved in the transport of an iron-containing substrate under laboratory conditions. This chain is Pyrroloquinoline quinone transporter, found in Escherichia coli (strain K12).